The primary structure comprises 148 residues: IQ domain-containing protein F5 (148 aa).

IQ domains are found at residues 11 to 40 (ETSAAVRIQAWWRGTLLRRTLLHAALSAWI) and 67 to 96 (KTWAIVKLQSWFRMWHIRHRYCRLLNAVRI).

The polypeptide is IQ domain-containing protein F5 (Iqcf5) (Mus musculus (Mouse)).